Reading from the N-terminus, the 498-residue chain is Resveratrol cleavage oxygenase 1 (498 aa).

Residues Y105 and K136 each coordinate piceatannol. Trans-resveratrol contacts are provided by Y105 and K136. 3 residues coordinate Fe cation: H169, H220, and H285. A piceatannol-binding site is contributed by E355. Residue E355 coordinates trans-resveratrol. H481 provides a ligand contact to Fe cation.

This sequence belongs to the carotenoid oxygenase family. It depends on Fe(2+) as a cofactor.

The catalysed reaction is trans-resveratrol + O2 = 3,5-dihydroxybenzaldehyde + 4-hydroxybenzaldehyde. It catalyses the reaction piceatannol + O2 = 3,5-dihydroxybenzaldehyde + 3,4-dihydroxybenzaldehyde. Its function is as follows. Dioxygenase that cleaves the interphenyl C-alpha-C-beta double bond of resveratrol to yield 3,5-dihydroxybenzaldehyde and 4-hydroxybenzaldehyde. Also cleaves piceatannol, a compound that differs from resveratrol only in the occurrence of an additional hydroxyl group, which leads to the production of 3,4-dihydroxybenzaldehyde and 3,5-hydroxybenzaldehyde. This Aspergillus fumigatus (strain ATCC MYA-4609 / CBS 101355 / FGSC A1100 / Af293) (Neosartorya fumigata) protein is Resveratrol cleavage oxygenase 1.